Consider the following 118-residue polypeptide: Large ribosomal subunit protein bL20 (118 aa).

It belongs to the bacterial ribosomal protein bL20 family.

In terms of biological role, binds directly to 23S ribosomal RNA and is necessary for the in vitro assembly process of the 50S ribosomal subunit. It is not involved in the protein synthesizing functions of that subunit. The polypeptide is Large ribosomal subunit protein bL20 (Stutzerimonas stutzeri (strain A1501) (Pseudomonas stutzeri)).